A 456-amino-acid chain; its full sequence is tRNA-2-methylthio-N(6)-dimethylallyladenosine synthase (456 aa).

Residues 6–125 (KRLFIKTYGC…LPELIAQAHR (120 aa)) enclose the MTTase N-terminal domain. [4Fe-4S] cluster-binding residues include cysteine 15, cysteine 51, cysteine 88, cysteine 163, cysteine 167, and cysteine 170. In terms of domain architecture, Radical SAM core spans 149–385 (QVEGYSAFVT…QELLSDQQAA (237 aa)). The region spanning 388-450 (ESMIGRTLPV…RNSLSGSLTG (63 aa)) is the TRAM domain.

This sequence belongs to the methylthiotransferase family. MiaB subfamily. Monomer. The cofactor is [4Fe-4S] cluster.

It localises to the cytoplasm. The catalysed reaction is N(6)-dimethylallyladenosine(37) in tRNA + (sulfur carrier)-SH + AH2 + 2 S-adenosyl-L-methionine = 2-methylsulfanyl-N(6)-dimethylallyladenosine(37) in tRNA + (sulfur carrier)-H + 5'-deoxyadenosine + L-methionine + A + S-adenosyl-L-homocysteine + 2 H(+). In terms of biological role, catalyzes the methylthiolation of N6-(dimethylallyl)adenosine (i(6)A), leading to the formation of 2-methylthio-N6-(dimethylallyl)adenosine (ms(2)i(6)A) at position 37 in tRNAs that read codons beginning with uridine. This Maricaulis maris (strain MCS10) (Caulobacter maris) protein is tRNA-2-methylthio-N(6)-dimethylallyladenosine synthase.